Here is a 92-residue protein sequence, read N- to C-terminus: C-C motif chemokine 3 (92 aa).

The first 23 residues, 1–23 (MQVSTAALAVLLCTMALCNQFSA), serve as a signal peptide directing secretion. 2 disulfide bridges follow: Cys33-Cys57 and Cys34-Cys73.

The protein belongs to the intercrine beta (chemokine CC) family. In terms of assembly, self-associates. Also heterodimer of MIP-1-alpha(4-69) and MIP-1-beta(3-69). Interacts with CCR1. In terms of processing, N-terminal processed form LD78-alpha(4-69) is produced by proteolytic cleavage after secretion from HTLV1-transformed T-cells.

Its subcellular location is the secreted. Its function is as follows. Monokine with inflammatory and chemokinetic properties. Binds to CCR1, CCR4 and CCR5. One of the major HIV-suppressive factors produced by CD8+ T-cells. Recombinant MIP-1-alpha induces a dose-dependent inhibition of different strains of HIV-1, HIV-2, and simian immunodeficiency virus (SIV). The polypeptide is C-C motif chemokine 3 (CCL3) (Homo sapiens (Human)).